A 190-amino-acid polypeptide reads, in one-letter code: GTP cyclohydrolase 1 (190 aa).

Zn(2+)-binding residues include cysteine 80, histidine 83, and cysteine 151.

It belongs to the GTP cyclohydrolase I family. As to quaternary structure, toroid-shaped homodecamer, composed of two pentamers of five dimers.

The catalysed reaction is GTP + H2O = 7,8-dihydroneopterin 3'-triphosphate + formate + H(+). The protein operates within cofactor biosynthesis; 7,8-dihydroneopterin triphosphate biosynthesis; 7,8-dihydroneopterin triphosphate from GTP: step 1/1. The polypeptide is GTP cyclohydrolase 1 (Rickettsia akari (strain Hartford)).